The following is a 226-amino-acid chain: MAANELASSSVQAFQEQSLGGFVSRKLLLHNPFDHNTQRAFAVAPSPLITHENNLSGNVLMLLSVLICGIICCLGLHYIIRCAFRRTSSFMISEPIAGLSTPCGSSNKGINKKALRMFPVVSYSPEMNLPGLGEECVICLSDFVSGEQIRMLPKCHHGFHVRCIDKWLQQHLTCPKCRHCLVETCQKILGDFSQADQVAATPTASVIVRIAPLEPEGRVNILRESS.

Residues Leu60–Ile80 form a helical membrane-spanning segment. The RING-type; atypical zinc finger occupies Cys136–Arg178.

The protein belongs to the RING-type zinc finger family. ATL subfamily.

It localises to the membrane. The enzyme catalyses S-ubiquitinyl-[E2 ubiquitin-conjugating enzyme]-L-cysteine + [acceptor protein]-L-lysine = [E2 ubiquitin-conjugating enzyme]-L-cysteine + N(6)-ubiquitinyl-[acceptor protein]-L-lysine.. The protein operates within protein modification; protein ubiquitination. The chain is RING-H2 finger protein ATL75 (ATL75) from Arabidopsis thaliana (Mouse-ear cress).